Consider the following 382-residue polypeptide: Mannitol-1-phosphate 5-dehydrogenase (382 aa).

Residue 3–14 (AVHFGAGNIGRG) participates in NAD(+) binding.

It belongs to the mannitol dehydrogenase family.

It catalyses the reaction D-mannitol 1-phosphate + NAD(+) = beta-D-fructose 6-phosphate + NADH + H(+). The chain is Mannitol-1-phosphate 5-dehydrogenase from Paenarthrobacter aurescens (strain TC1).